Consider the following 455-residue polypeptide: RQC trigger complex subunit RQT4 homolog (455 aa).

Disordered regions lie at residues 64-98 and 118-148; these read STHSGNSPSIMKNKKNVTPNNNIRQKNTATSSHPS and PASRNKSQSNNISSHEKSSKTTKNVSPGVMT. 2 stretches are compositionally biased toward polar residues: residues 65–98 and 119–130; these read THSGNSPSIMKNKKNVTPNNNIRQKNTATSSHPS and ASRNKSQSNNIS. Ser-70 carries the phosphoserine modification. Position 380 is a phosphoserine (Ser-380).

As to quaternary structure, component of the RQT (ribosome quality control trigger) complex.

It is found in the cytoplasm. The protein localises to the cytosol. Functionally, probably functions as part of the RQC trigger (RQT) complex that activates the ribosome quality control (RQC) pathway, a pathway that degrades nascent peptide chains during problematic translation. The chain is RQC trigger complex subunit RQT4 homolog from Schizosaccharomyces pombe (strain 972 / ATCC 24843) (Fission yeast).